The primary structure comprises 429 residues: UDP-N-acetylglucosamine 1-carboxyvinyltransferase (429 aa).

22–23 serves as a coordination point for phosphoenolpyruvate; the sequence is KN. Arg-102 is a UDP-N-acetyl-alpha-D-glucosamine binding site. Cys-126 acts as the Proton donor in catalysis. Position 126 is a 2-(S-cysteinyl)pyruvic acid O-phosphothioketal (Cys-126). UDP-N-acetyl-alpha-D-glucosamine-binding positions include 131–135, Asp-316, and Ile-338; that span reads RPVDL.

The protein belongs to the EPSP synthase family. MurA subfamily.

The protein resides in the cytoplasm. It catalyses the reaction phosphoenolpyruvate + UDP-N-acetyl-alpha-D-glucosamine = UDP-N-acetyl-3-O-(1-carboxyvinyl)-alpha-D-glucosamine + phosphate. It participates in cell wall biogenesis; peptidoglycan biosynthesis. Cell wall formation. Adds enolpyruvyl to UDP-N-acetylglucosamine. The polypeptide is UDP-N-acetylglucosamine 1-carboxyvinyltransferase (Rhodopseudomonas palustris (strain HaA2)).